A 219-amino-acid chain; its full sequence is Thiamine-phosphate synthase (219 aa).

Residues 44 to 48 (QFREK) and Asn79 contribute to the 4-amino-2-methyl-5-(diphosphooxymethyl)pyrimidine site. The Mg(2+) site is built by Asp80 and Asp99. Ser117 contributes to the 4-amino-2-methyl-5-(diphosphooxymethyl)pyrimidine binding site. Residue 143–145 (TST) coordinates 2-[(2R,5Z)-2-carboxy-4-methylthiazol-5(2H)-ylidene]ethyl phosphate. Lys146 contacts 4-amino-2-methyl-5-(diphosphooxymethyl)pyrimidine. Residues Gly175 and 195 to 196 (IS) each bind 2-[(2R,5Z)-2-carboxy-4-methylthiazol-5(2H)-ylidene]ethyl phosphate.

The protein belongs to the thiamine-phosphate synthase family. It depends on Mg(2+) as a cofactor.

The enzyme catalyses 2-[(2R,5Z)-2-carboxy-4-methylthiazol-5(2H)-ylidene]ethyl phosphate + 4-amino-2-methyl-5-(diphosphooxymethyl)pyrimidine + 2 H(+) = thiamine phosphate + CO2 + diphosphate. It catalyses the reaction 2-(2-carboxy-4-methylthiazol-5-yl)ethyl phosphate + 4-amino-2-methyl-5-(diphosphooxymethyl)pyrimidine + 2 H(+) = thiamine phosphate + CO2 + diphosphate. The catalysed reaction is 4-methyl-5-(2-phosphooxyethyl)-thiazole + 4-amino-2-methyl-5-(diphosphooxymethyl)pyrimidine + H(+) = thiamine phosphate + diphosphate. It participates in cofactor biosynthesis; thiamine diphosphate biosynthesis; thiamine phosphate from 4-amino-2-methyl-5-diphosphomethylpyrimidine and 4-methyl-5-(2-phosphoethyl)-thiazole: step 1/1. Functionally, condenses 4-methyl-5-(beta-hydroxyethyl)thiazole monophosphate (THZ-P) and 2-methyl-4-amino-5-hydroxymethyl pyrimidine pyrophosphate (HMP-PP) to form thiamine monophosphate (TMP). This Bacillus cereus (strain AH820) protein is Thiamine-phosphate synthase.